The chain runs to 380 residues: Sterol 24-C-methyltransferase ERG6B (380 aa).

Belongs to the class I-like SAM-binding methyltransferase superfamily. Erg6/SMT family.

The catalysed reaction is lanosterol + S-adenosyl-L-methionine = eburicol + S-adenosyl-L-homocysteine + H(+). Its pathway is steroid metabolism; ergosterol biosynthesis. Its function is as follows. Sterol 24-C-methyltransferase; part of the third module of ergosterol biosynthesis pathway that includes the late steps of the pathway. ERG6A and ERG6B methylate lanosterol at C-24 to produce eburicol. The third module or late pathway involves the ergosterol synthesis itself through consecutive reactions that mainly occur in the endoplasmic reticulum (ER) membrane. Firstly, the squalene synthase ERG9 catalyzes the condensation of 2 farnesyl pyrophosphate moieties to form squalene, which is the precursor of all steroids. Squalene synthase is crucial for balancing the incorporation of farnesyl diphosphate (FPP) into sterol and nonsterol isoprene synthesis. Secondly, squalene is converted into lanosterol by the consecutive action of the squalene epoxidase ERG1 and the lanosterol synthase ERG7. Then, the delta(24)-sterol C-methyltransferase ERG6 methylates lanosterol at C-24 to produce eburicol. Eburicol is the substrate of the sterol 14-alpha demethylase encoded by CYP51A, CYP51B and CYP51C, to yield 4,4,24-trimethyl ergosta-8,14,24(28)-trienol. CYP51B encodes the enzyme primarily responsible for sterol 14-alpha-demethylation, and plays an essential role in ascospore formation. CYP51A encodes an additional sterol 14-alpha-demethylase, induced on ergosterol depletion and responsible for the intrinsic variation in azole sensitivity. The third CYP51 isoform, CYP51C, does not encode a sterol 14-alpha-demethylase, but is required for full virulence on host wheat ears. The C-14 reductase ERG24 then reduces the C14=C15 double bond which leads to 4,4-dimethylfecosterol. A sequence of further demethylations at C-4, involving the C-4 demethylation complex containing the C-4 methylsterol oxidases ERG25, the sterol-4-alpha-carboxylate 3-dehydrogenase ERG26 and the 3-keto-steroid reductase ERG27, leads to the production of fecosterol via 4-methylfecosterol. ERG28 has a role as a scaffold to help anchor ERG25, ERG26 and ERG27 to the endoplasmic reticulum. The C-8 sterol isomerase ERG2 then catalyzes the reaction which results in unsaturation at C-7 in the B ring of sterols and thus converts fecosterol to episterol. The sterol-C5-desaturases ERG3A and ERG3BB then catalyze the introduction of a C-5 double bond in the B ring to produce 5-dehydroepisterol. The C-22 sterol desaturases ERG5A and ERG5B further convert 5-dehydroepisterol into ergosta-5,7,22,24(28)-tetraen-3beta-ol by forming the C-22(23) double bond in the sterol side chain. Finally, ergosta-5,7,22,24(28)-tetraen-3beta-ol is substrate of the C-24(28) sterol reductase ERG4 to produce ergosterol. This chain is Sterol 24-C-methyltransferase ERG6B, found in Gibberella zeae (strain ATCC MYA-4620 / CBS 123657 / FGSC 9075 / NRRL 31084 / PH-1) (Wheat head blight fungus).